The following is an 81-amino-acid chain: uncharacterized protein (81 aa).

This is an uncharacterized protein from Homo sapiens (Human).